Reading from the N-terminus, the 1110-residue chain is Envelopment polyprotein (1110 aa).

Positions 1–8 are excised as a propeptide; that stretch reads MALKETDA. The Lumenal segment spans residues 1-290; the sequence is MALKETDAKI…KYSKNIYKQT (290 aa). Positions 14 to 16 match the Cell attachment site motif; it reads RGD. 2 N-linked (GlcNAc...) asparagine; by host glycosylation sites follow: Asn46 and Asn92. 2 disulfide bridges follow: Cys90–Cys121 and Cys98–Cys132. A non-covalent dimerization region spans residues 153–171; sequence IDNKRKLSIGTKFYIIESL. The N-linked (GlcNAc...) asparagine; by host glycan is linked to Asn186. Cys200 and Cys261 are oxidised to a cystine. Residues 291–342 traverse the membrane as a helical segment; that stretch reads ACINFSWFRLIMIALIVYFPIRYLVNKTSKTLFYGYDLLGLITYPILLLINY. Topologically, residues 343–459 are cytoplasmic; that stretch reads LWSYFPLKCK…VPGCDRFVTN (117 aa). Residues 460 to 1044 are Lumenal-facing; it reads RYDKCPEKDQ…HFGSFFDTVR (585 aa). 3 N-linked (GlcNAc...) asparagine; by host glycosylation sites follow: Asn566, Asn582, and Asn957. Residues 1045 to 1065 form a helical membrane-spanning segment; it reads VVLLILFVFALAYLCSIVATM. Residues 1066-1110 lie on the Cytoplasmic side of the membrane; the sequence is CRGYVRNKSYKTKYIEDTNDYSLVSTSSGKDTITRRRPPLDFSGI. The interval 1091-1110 is disordered; it reads TSSGKDTITRRRPPLDFSGI.

It belongs to the tospovirus envelope glycoprotein family. As to quaternary structure, homodimer; disulfide-linked. Heterodimer with Glycoprotein C. Interacts with nucleoprotein. In terms of assembly, heterodimer with Glycoprotein N. Interacts with nucleoprotein. Post-translationally, specific enzymatic cleavages in vivo yield mature proteins including Glycoprotein N and Glycoprotein C. Glycosylated with O-linked glycans. Glycosylation is essential for proper subcellular location. In terms of processing, cleaved at acidic pH.

The protein resides in the virion membrane. It is found in the host Golgi apparatus membrane. Its subcellular location is the host endoplasmic reticulum membrane. Its function is as follows. Forms the spikes present at the surface of the virion together with Glycoprotein C. They are able to attach the virion to a cell receptor and to promote fusion of membranes after endocytosis of the virion. Plays a role in virus binding and/or entry into the vector midgut. Forms the spikes present at the surface of the virion together with Glycoprotein N. They are able to attach the virion to a cell receptor and to promote fusion of membranes after endocytosis of the virion. Probable class II fusion protein. The sequence is that of Envelopment polyprotein (GP) from Impatiens necrotic spot virus (INSV).